The following is a 1285-amino-acid chain: MEVSPAIARYFEELEGELDAAIRLAAAARARGLDPRTEIEIPVASDLADRVEALLGYKGIAARIRELEAEMSREEAALRIGDDFAARKFGETTPEEILDHAIRAAMALLTEGVVAAPTEGIGKVSLGKNDDGTDYLKIYYAGPIRSAGGTAQALSVLVGDYVRQALGINRYIPRPEEVERYIEEIRQYNNIMSLQYLPSEKELRMIIENCPVCIDGEPTEQQEVSGYRNLERVETNTVRGGMALVVAEGLALKAPKVLKNVRKMKMEGWDWIEEMIGGGPKSDDDDASAAIKPKDKYIRDLIGGRPVFSYPMRKGGFRLRLGRARNTGFAAAGFNPATLHILGDFLAVGTQMKVERPGKAAGVVPVDSIQGPTVKLRSGEVRRVDDAAEARRLAGQVDEILDVGEMLVSFGEFMENNHPLMPPAYCEEWWMLEGGPRHPENELEAIEFALDGVPLHPDYTYMWDDVAPADIARLAEAVGTGGTVEDGVLMIRNTPETKAILEELLIPHHLSGDRLAIREHLAFLACLGLTLQLTKRPAWQDAPMENSLDLVMHLSGFTVRSRAGTRIGGRMGRPGKSKPREMRPPPHSLFPIGDEGGARRSFQAACSSKPRSNTDGGVIEAEVGERQCPACGAFTYKNLCECGAHTNPVFRCPRCGKDVGQDVCPRCNAETVCLQKVTINVKAEYLAAMESLGVRESSVALLKGVKGLISRERPVEPIEKGILRALQNLYVFKDGTVRYDMIDLPLTHFRPDEVGVPIERLRELGYTHDTYGRELVSDDQVLELRHQDILVSEGCGEWLVRVAKFVDDLLVRLYGLEPFYKAEKPLDLVGHLLMGLAPHTSAGVLVRLIGFSKAPVGYGHPFFHAAKRRNCFAGDTEITVSDGRRWMSLPIRQFVTENFDISKPGLDHVGTFYSDPRQPFYVRSIDSQGKTSLKRVTSVSVHRAPAHLVRFATRRGRVLTVTPDHAMLVWDTDYLRKIKALEVAVGDRVPVEEGGLVVADEVVSRETVQALDDRVYCLTVAENHTLVANGIFCGQCDGDEDCVMLLLDGLINFSRAYLPETRGGTMDAPLVLTTRIDPSEVDKESHNVDVCDHYPIEVYNGCLAYAHPKDLDAFVDRVERRLGTPAQCEGFLFTHQTSNISAGPLESTYTRLGSMLDKLEAELDLAKRIRAVDEDDVAERVLNTHFIRDLQGNLNAFSKQKVRCMKCNAKYRRMPLAGKCTRCGGHVIPTVHEGSVKKYLEMSRNICATYAISDYTKQRVEVLFMQIESTFGEPPEKQLGLADFM.

The disordered stretch occupies residues 565–586 (TRIGGRMGRPGKSKPREMRPPP).

Belongs to the archaeal DNA polymerase II family. As to quaternary structure, heterodimer of a large subunit and a small subunit. In terms of processing, this protein undergoes a protein self splicing that involves a post-translational excision of the intervening region (intein) followed by peptide ligation.

The enzyme catalyses DNA(n) + a 2'-deoxyribonucleoside 5'-triphosphate = DNA(n+1) + diphosphate. It catalyses the reaction Exonucleolytic cleavage in the 3'- to 5'-direction to yield nucleoside 5'-phosphates.. Possesses two activities: a DNA synthesis (polymerase) and an exonucleolytic activity that degrades single-stranded DNA in the 3'- to 5'-direction. Has a template-primer preference which is characteristic of a replicative DNA polymerase. In Methanoculleus marisnigri (strain ATCC 35101 / DSM 1498 / JR1), this protein is DNA polymerase II large subunit.